A 137-amino-acid chain; its full sequence is Large ribosomal subunit protein uL16 (137 aa).

Belongs to the universal ribosomal protein uL16 family. In terms of assembly, part of the 50S ribosomal subunit.

Functionally, binds 23S rRNA and is also seen to make contacts with the A and possibly P site tRNAs. The chain is Large ribosomal subunit protein uL16 from Streptococcus suis (strain 98HAH33).